Reading from the N-terminus, the 382-residue chain is Glutamine synthetase cytosolic isozyme (382 aa).

Residues 36–118 (GKICAEYVWI…VMCDCYEPPK (83 aa)) form the GS beta-grasp domain. Residues 135–382 (TRFACAEVME…RLIVETTILL (248 aa)) enclose the GS catalytic domain.

It belongs to the glutamine synthetase family. In terms of assembly, homooctamer.

Its subcellular location is the cytoplasm. It catalyses the reaction L-glutamate + NH4(+) + ATP = L-glutamine + ADP + phosphate + H(+). In Chlamydomonas reinhardtii (Chlamydomonas smithii), this protein is Glutamine synthetase cytosolic isozyme (GLN1).